A 702-amino-acid polypeptide reads, in one-letter code: Solute carrier organic anion transporter family member 1B3 (702 aa).

The Cytoplasmic segment spans residues 1-28 (MDQHQHLNKTAESASSEKKKTRRCNGFK). Residues 29–48 (MFLAALSFSYIAKALGGIIM) form a helical membrane-spanning segment. The Extracellular portion of the chain corresponds to 49–67 (KISITQIERRFDISSSLAG). A helical transmembrane segment spans residues 68 to 88 (LIDGSFEIGNLLVIVFVSYFG). The Cytoplasmic segment spans residues 89–94 (SKLHRP). A helical transmembrane segment spans residues 95 to 119 (KLIGIGCLLMGTGSILTSLPHFFMG). Residues 120–168 (YYRYSKETHINPSENSTSSLSTCLINQTLSFNGTSPEIVEKDCVKESGS) lie on the Extracellular side of the membrane. N-linked (GlcNAc...) asparagine glycans are attached at residues N134, N145, and N151. A helical membrane pass occupies residues 169-197 (HMWIYVFMGNMLRGIGETPIVPLGISYID). Residues 198 to 216 (DFAKEGHSSLYLGSLNAIG) lie on the Cytoplasmic side of the membrane. The chain crosses the membrane as a helical span at residues 217-237 (MIGPVIGFALGSLFAKMYVDI). Over 238–255 (GYVDLSTIRITPKDSRWV) the chain is Extracellular. The chain crosses the membrane as a helical span at residues 256-280 (GAWWLGFLVSGLFSIISSIPFFFLP). Residues 281-331 (KNPNKPQKERKISLSLHVLKTNDDRNQTANLTNQGKNVTKNVTGFFQSLKS) lie on the Cytoplasmic side of the membrane. S293 and S295 each carry phosphoserine. Residues 332 to 353 (ILTNPLYVIFLLLTLLQVSSFI) traverse the membrane as a helical segment. Over 354 to 373 (GSFTYVFKYMEQQYGQSASH) the chain is Extracellular. A helical transmembrane segment spans residues 374-397 (ANFLLGIITIPTVATGMFLGGFII). The Cytoplasmic portion of the chain corresponds to 398-401 (KKFK). The chain crosses the membrane as a helical span at residues 402–425 (LSLVGIAKFSFLTSMISFLFQLLY). The Extracellular portion of the chain corresponds to 426-537 (FPLICESKSV…NTCTRKFFIY (112 aa)). N445 carries N-linked (GlcNAc...) asparagine glycosylation. The Kazal-like domain maps to 453–508 (DVPLSYCNSECNCDESQWEPVCGNNGITYLSPCLAGCKSSSGIKKHTVFYNCSCVE). 3 disulfide bridges follow: C459–C489, C465–C485, and C474–C506. Residues N503 and N516 are each glycosylated (N-linked (GlcNAc...) asparagine). Residues 538–560 (VAIQVINSLFSATGGTTFILLTV) traverse the membrane as a helical segment. At 561-569 (KIVQPELKA) the chain is on the cytoplasmic side. A helical membrane pass occupies residues 570 to 595 (LAMGFQSMVIRTLGGILAPIYFGALI). Topologically, residues 596 to 629 (DKTCMKWSTNSCGAQGACRIYNSVFFGRVYLGLS) are extracellular. The helical transmembrane segment at 630–647 (IALRFPALVLYIVFIFAM) threads the bilayer. Residues 648-695 (KKKFQGKDTKASDNERKVMDEANLEFLNNGEHFVPSAGTDSKTCNLDM) lie on the Cytoplasmic side of the membrane. S683 bears the Phosphoserine mark.

This sequence belongs to the organo anion transporter (TC 2.A.60) family. In terms of processing, N-glycosylated. Highly expressed in liver, in particular at the basolateral membrane of hepatocytes near the central vein. Expressed in the placenta. In testis, primarily localized to the basal membrane of Sertoli cells and weakly expressed in Leydig cells and within the tubules.

It localises to the basolateral cell membrane. The protein resides in the basal cell membrane. The enzyme catalyses estrone 3-sulfate(out) + hydrogencarbonate(in) = estrone 3-sulfate(in) + hydrogencarbonate(out). It catalyses the reaction 17beta-estradiol 17-O-(beta-D-glucuronate)(out) = 17beta-estradiol 17-O-(beta-D-glucuronate)(in). The catalysed reaction is taurocholate(out) = taurocholate(in). It carries out the reaction estrone 3-sulfate(out) = estrone 3-sulfate(in). The enzyme catalyses dehydroepiandrosterone 3-sulfate(out) = dehydroepiandrosterone 3-sulfate(in). It catalyses the reaction leukotriene C4(out) = leukotriene C4(in). The catalysed reaction is L-thyroxine(out) = L-thyroxine(in). It carries out the reaction prostaglandin E2(out) = prostaglandin E2(in). The enzyme catalyses (4E,15E)-bilirubin IXalpha C8-beta-D-glucuronoside(out) = (4E,15E)-bilirubin IXalpha C8-beta-D-glucuronoside(in). It catalyses the reaction bilirubin IXalpha bis-beta-D-glucuronoside(out) = bilirubin IXalpha bis-beta-D-glucuronoside(in). In terms of biological role, mediates the Na(+)-independent uptake of organic anions. Shows broad substrate specificity, can transport both organic anions such as bile acid taurocholate (cholyltaurine) and conjugated steroids (17-beta-glucuronosyl estradiol, dehydroepiandrosterone sulfate (DHEAS), and estrone 3-sulfate), as well as eicosanoid leukotriene C4, prostaglandin E2 and L-thyroxine (T4). Hydrogencarbonate/HCO3(-) acts as the probable counteranion that exchanges for organic anions. Shows a pH-sensitive substrate specificity towards sulfated steroids, taurocholate and T4 which may be ascribed to the protonation state of the binding site and leads to a stimulation of substrate transport in an acidic microenvironment. Involved in the clearance of bile acids and organic anions from the liver. Can take up bilirubin glucuronides from plasma into the liver, contributing to the detoxification-enhancing liver-blood shuttling loop. Transports coproporphyrin I and III, by-products of heme synthesis, and may be involved in their hepatic disposition. May contribute to regulate the transport of organic compounds in testes across the blood-testis-barrier. Can transport HMG-CoA reductase inhibitors (also known as statins) such as pitavastatin, a clinically important class of hypolipidemic drugs. May play an important role in plasma and tissue distribution of the structurally diverse chemotherapeutic drugs methotrexate and paclitaxel. May also transport antihypertension agents, such as the angiotensin-converting enzyme (ACE) inhibitor prodrug enalapril, and the highly selective angiotensin II AT1-receptor antagonist valsartan, in the liver. This Homo sapiens (Human) protein is Solute carrier organic anion transporter family member 1B3 (SLCO1B3).